The chain runs to 94 residues: Neutrophil defensin 3 (94 aa).

An N-terminal signal peptide occupies residues 1–19 (MRTLAILAAILLVALQAQA). Positions 20–38 (EPLQARADEVAAAPEQIAA) are excised as a propeptide. 3 cysteine pairs are disulfide-bonded: C66/C94, C68/C83, and C73/C93.

It belongs to the alpha-defensin family. Dimer. As to quaternary structure, (Microbial infection) Interacts with herpes virus 1 HHV-1 envelope glycoprotein B; this interaction inhibits viral infection.

It is found in the secreted. Effector molecule of the innate immune system that acts via antibiotic-like properties against a broad array of infectious agents including bacteria, fungi, and viruses. Possesses the ability to neutralize bacterial toxins such as B.anthracis lethal factor, Clostridium difficile cytotoxin B as well as leukocidin produced by Staphylococcus aureus. Also blocks herpes simplex virus infection by interacting with envelope glycoprotein B and thus preventing its binding to heparan sulfate, the receptor for attachment. The chain is Neutrophil defensin 3 (DEFA3) from Homo sapiens (Human).